Here is a 368-residue protein sequence, read N- to C-terminus: Glutamate 5-kinase (368 aa).

Lysine 15 is an ATP binding site. The substrate site is built by serine 55, aspartate 143, and asparagine 155. ATP contacts are provided by residues 175 to 176 (SD) and 217 to 223 (SGGMVSK). Positions 277-354 (EGRLTIDAGA…DAQEAALGYA (78 aa)) constitute a PUA domain.

Belongs to the glutamate 5-kinase family.

It is found in the cytoplasm. The catalysed reaction is L-glutamate + ATP = L-glutamyl 5-phosphate + ADP. It functions in the pathway amino-acid biosynthesis; L-proline biosynthesis; L-glutamate 5-semialdehyde from L-glutamate: step 1/2. Its function is as follows. Catalyzes the transfer of a phosphate group to glutamate to form L-glutamate 5-phosphate. The chain is Glutamate 5-kinase from Sphingopyxis alaskensis (strain DSM 13593 / LMG 18877 / RB2256) (Sphingomonas alaskensis).